A 479-amino-acid polypeptide reads, in one-letter code: Aspartyl/glutamyl-tRNA(Asn/Gln) amidotransferase subunit B (479 aa).

This sequence belongs to the GatB/GatE family. GatB subfamily. As to quaternary structure, heterotrimer of A, B and C subunits.

The enzyme catalyses L-glutamyl-tRNA(Gln) + L-glutamine + ATP + H2O = L-glutaminyl-tRNA(Gln) + L-glutamate + ADP + phosphate + H(+). It carries out the reaction L-aspartyl-tRNA(Asn) + L-glutamine + ATP + H2O = L-asparaginyl-tRNA(Asn) + L-glutamate + ADP + phosphate + 2 H(+). Allows the formation of correctly charged Asn-tRNA(Asn) or Gln-tRNA(Gln) through the transamidation of misacylated Asp-tRNA(Asn) or Glu-tRNA(Gln) in organisms which lack either or both of asparaginyl-tRNA or glutaminyl-tRNA synthetases. The reaction takes place in the presence of glutamine and ATP through an activated phospho-Asp-tRNA(Asn) or phospho-Glu-tRNA(Gln). The sequence is that of Aspartyl/glutamyl-tRNA(Asn/Gln) amidotransferase subunit B from Streptococcus pyogenes serotype M1.